Reading from the N-terminus, the 269-residue chain is 2-dehydro-3-deoxyphosphooctonate aldolase (269 aa).

It belongs to the KdsA family.

The protein resides in the cytoplasm. It carries out the reaction D-arabinose 5-phosphate + phosphoenolpyruvate + H2O = 3-deoxy-alpha-D-manno-2-octulosonate-8-phosphate + phosphate. The protein operates within carbohydrate biosynthesis; 3-deoxy-D-manno-octulosonate biosynthesis; 3-deoxy-D-manno-octulosonate from D-ribulose 5-phosphate: step 2/3. It functions in the pathway bacterial outer membrane biogenesis; lipopolysaccharide biosynthesis. The protein is 2-dehydro-3-deoxyphosphooctonate aldolase of Chlamydia abortus (strain DSM 27085 / S26/3) (Chlamydophila abortus).